Here is a 93-residue protein sequence, read N- to C-terminus: MIMKPILIFLGIILMFIGFFMITLGMILPSSQENYEKPETEKTESSVEYSGIVMIGPIPIVFGNSPGLMILSVLIAILMIIWMFLFAFGIRIK.

The next 2 helical transmembrane spans lie at 7–27 (LIFLGIILMFIGFFMITLGMI) and 70–90 (ILSVLIAILMIIWMFLFAFGI).

The protein localises to the cell membrane. This is an uncharacterized protein from Methanocaldococcus jannaschii (strain ATCC 43067 / DSM 2661 / JAL-1 / JCM 10045 / NBRC 100440) (Methanococcus jannaschii).